Reading from the N-terminus, the 121-residue chain is Large ribosomal subunit protein bL20 (121 aa).

This sequence belongs to the bacterial ribosomal protein bL20 family.

Its function is as follows. Binds directly to 23S ribosomal RNA and is necessary for the in vitro assembly process of the 50S ribosomal subunit. It is not involved in the protein synthesizing functions of that subunit. This is Large ribosomal subunit protein bL20 from Petrotoga mobilis (strain DSM 10674 / SJ95).